The following is a 231-amino-acid chain: Large ribosomal subunit protein uL1 (231 aa).

It belongs to the universal ribosomal protein uL1 family. As to quaternary structure, part of the 50S ribosomal subunit.

Binds directly to 23S rRNA. The L1 stalk is quite mobile in the ribosome, and is involved in E site tRNA release. Its function is as follows. Protein L1 is also a translational repressor protein, it controls the translation of the L11 operon by binding to its mRNA. This is Large ribosomal subunit protein uL1 from Francisella philomiragia subsp. philomiragia (strain ATCC 25017 / CCUG 19701 / FSC 153 / O#319-036).